A 283-amino-acid polypeptide reads, in one-letter code: Protein FdhE homolog (283 aa).

It belongs to the FdhE family.

Its subcellular location is the cytoplasm. In terms of biological role, necessary for formate dehydrogenase activity. The protein is Protein FdhE homolog of Aquifex aeolicus (strain VF5).